The sequence spans 102 residues: Small ribosomal subunit protein uS10 (102 aa).

It belongs to the universal ribosomal protein uS10 family. In terms of assembly, part of the 30S ribosomal subunit.

Functionally, involved in the binding of tRNA to the ribosomes. This Methanosphaera stadtmanae (strain ATCC 43021 / DSM 3091 / JCM 11832 / MCB-3) protein is Small ribosomal subunit protein uS10.